The following is a 183-amino-acid chain: Phospholipase A2 inhibitor gamma subunit A1 (183 aa).

Cystine bridges form between Cys-3/Cys-28, Cys-6/Cys-13, Cys-21/Cys-49, Cys-55/Cys-76, Cys-77/Cys-82, Cys-100/Cys-125, Cys-118/Cys-147, and Cys-151/Cys-173. A glycan (N-linked (GlcNAc...) asparagine) is linked at Asn-158.

The protein belongs to the CNF-like-inhibitor family. In terms of assembly, heterodimer of subunit A and subunit B. As to expression, expressed by the liver.

The protein localises to the secreted. Functionally, phospholipase A2 (PA2) inhibitor. Inhibits the enzymatic activity of PA2 of Deinagkistrodon acutus. Also shows a wide anti-hemorrhage activities to D.acutus, Naja atra and Agkistrodon halys venom. The native protein is more potent than the recombinant one. The polypeptide is Phospholipase A2 inhibitor gamma subunit A1 (Trimerodytes annularis (Red-bellied annulate keelback)).